Reading from the N-terminus, the 131-residue chain is Small ribosomal subunit protein uS11 (131 aa).

This sequence belongs to the universal ribosomal protein uS11 family. In terms of assembly, part of the 30S ribosomal subunit. Interacts with proteins S7 and S18. Binds to IF-3.

In terms of biological role, located on the platform of the 30S subunit, it bridges several disparate RNA helices of the 16S rRNA. Forms part of the Shine-Dalgarno cleft in the 70S ribosome. The protein is Small ribosomal subunit protein uS11 of Buchnera aphidicola subsp. Acyrthosiphon pisum (strain 5A).